The following is a 168-amino-acid chain: MNKTTTKMKVAVVAIVVYLAVGNVDSSPDVMKNLCLNFGKALDECKAEMNLSDSIKDDFANFWVEGYEVSNRDTGCAILCLSKKLDMIDPDGKLHHGNAMEFAKKHGADEAMAKQLLDIIHNCENSTPPNDDACLKTLDIAKCFKKEIHKLNWAPNMDLVVGEVLAEV.

A signal peptide spans 1 to 26 (MNKTTTKMKVAVVAIVVYLAVGNVDS). 3 disulfides stabilise this stretch: Cys45–Cys80, Cys76–Cys134, and Cys123–Cys143.

It belongs to the PBP/GOBP family. Homodimer. Antenna.

Its function is as follows. This major soluble protein in olfactory sensilla of male moths might serve to solubilize the extremely hydrophobic pheromone molecules and to transport pheromone through the aqueous lymph to receptors located on olfactory cilia. PBP is also found in sensilla from female M.sexta antennae. In Manduca sexta (Tobacco hawkmoth), this protein is Pheromone-binding protein.